We begin with the raw amino-acid sequence, 349 residues long: MTDSKPDALTYADAGVDIDAGNALVDRIKPAAAATNRAGVMAGLGGFGALFDLKAAGYDDPVLVAATDGVGTKLKIAIDTGNFDTIGVDLVAMCVNDLVCQGAEPLFFLDYFATGKLDVDDAARIVEGIAAGCKASGCALIGGETAEMPGMYAPGDFDLAGFSVGAMERGRALPDGVAEGDVLLGLASDGVHSNGYSLVRRVVERSGLAWDAPAPFAQSSLGEALLAPTRLYVQPALAAIRAGGVHALAHITGGGLTENIPRVLPDGLGVDIDLSSWSLPPVFGWLAQEGALDQAELLKTFNAGLGMVLVVSADAVDGLTWTLEDAGESVHRIGTVTAGAGVRYSGSLG.

This sequence belongs to the AIR synthase family.

The protein resides in the cytoplasm. The catalysed reaction is 2-formamido-N(1)-(5-O-phospho-beta-D-ribosyl)acetamidine + ATP = 5-amino-1-(5-phospho-beta-D-ribosyl)imidazole + ADP + phosphate + H(+). The protein operates within purine metabolism; IMP biosynthesis via de novo pathway; 5-amino-1-(5-phospho-D-ribosyl)imidazole from N(2)-formyl-N(1)-(5-phospho-D-ribosyl)glycinamide: step 2/2. This chain is Phosphoribosylformylglycinamidine cyclo-ligase, found in Jannaschia sp. (strain CCS1).